Here is a 48-residue protein sequence, read N- to C-terminus: uncharacterized protein (48 aa).

It is found in the plastid. The protein localises to the cyanelle. This is an uncharacterized protein from Cyanophora paradoxa.